A 339-amino-acid polypeptide reads, in one-letter code: Transcription initiation factor IIB (339 aa).

The TFIIB-type zinc finger occupies 39–70 (EELICPVCGSKNIIKDYERAEIVCEMCGCVLQ). Zn(2+)-binding residues include cysteine 43, cysteine 46, cysteine 62, and cysteine 65. 2 consecutive repeat copies span residues 156–239 (SELD…SREL) and 250–331 (DYVP…ELTE).

It belongs to the TFIIB family.

Functionally, stabilizes TBP binding to an archaeal box-A promoter. Also responsible for recruiting RNA polymerase II to the pre-initiation complex (DNA-TBP-TFIIB). The polypeptide is Transcription initiation factor IIB (Methanococcus maripaludis (strain C6 / ATCC BAA-1332)).